Reading from the N-terminus, the 252-residue chain is Major prion protein (252 aa).

Residues 1–22 form the signal peptide; sequence MANLGCWMLVLFVATWSDLGLC. The tract at residues 23 to 38 is interaction with ADGRG6; the sequence is KKRPKPGGWNTGGSRY. The interaction with GRB2, ERI3 and SYN1 stretch occupies residues 23–229; the sequence is KKRPKPGGWN…ESQAYYQRGS (207 aa). Residues 26–106 form a disordered region; it reads PKPGGWNTGG…QWNKPSKPKT (81 aa). 5 consecutive repeat copies span residues 51–58, 59–66, 67–74, 75–82, and 83–90. The 5 X 8 AA tandem repeats of P-H-G-G-G-W-G-Q stretch occupies residues 51-90; that stretch reads PQGGGWGQPHGGGWGQPHGGGWGQPHGGSWGQPHGGGWGQ. The segment covering 52 to 94 has biased composition (gly residues); the sequence is QGGGWGQPHGGGWGQPHGGGWGQPHGGSWGQPHGGGWGQGGGT. Cu(2+)-binding residues include His60, Gly61, Gly62, His68, Gly69, Gly70, His76, Gly77, Gly78, His84, Gly85, and Gly86. The cysteines at positions 178 and 213 are disulfide-linked. Asn180 and Asn196 each carry an N-linked (GlcNAc...) asparagine glycan. Ser229 is lipidated: GPI-anchor amidated serine. A propeptide spans 230–252 (removed in mature form); the sequence is SMVLFSSPPVILLISFLIFLIVG.

Belongs to the prion family. Monomer and homodimer. Has a tendency to aggregate into amyloid fibrils containing a cross-beta spine, formed by a steric zipper of superposed beta-strands. Soluble oligomers may represent an intermediate stage on the path to fibril formation. Copper binding may promote oligomerization. Interacts with GRB2, APP, ERI3/PRNPIP and SYN1. Mislocalized cytosolically exposed PrP interacts with MGRN1; this interaction alters MGRN1 subcellular location and causes lysosomal enlargement. Interacts with APP. Interacts with KIAA1191. Interacts with ADGRG6.

The protein resides in the cell membrane. The protein localises to the golgi apparatus. Its primary physiological function is unclear. May play a role in neuronal development and synaptic plasticity. May be required for neuronal myelin sheath maintenance. May promote myelin homeostasis through acting as an agonist for ADGRG6 receptor. May play a role in iron uptake and iron homeostasis. Soluble oligomers are toxic to cultured neuroblastoma cells and induce apoptosis (in vitro). Association with GPC1 (via its heparan sulfate chains) targets PRNP to lipid rafts. Also provides Cu(2+) or Zn(2+) for the ascorbate-mediated GPC1 deaminase degradation of its heparan sulfate side chains. The protein is Major prion protein (PRNP) of Sapajus apella (Brown-capped capuchin).